The following is a 146-amino-acid chain: MKINKDIRTFIDNKQIPSVKTSEITASFKTSMENQSSKMKLDQLTRLLSDIEAFGKRLTKSRNFKDLARFKGLVKRFVKEAVDSGLSHETSKSFDLYGNSRTLGLVKEIDDKLIQLTEEMMDQEKPAIDLLERIGEIKGLLINLYT.

This is an uncharacterized protein from Bacillus subtilis (strain 168).